Reading from the N-terminus, the 291-residue chain is D-alanyl-D-alanine carboxypeptidase (291 aa).

The N-terminal stretch at 1 to 29 is a signal peptide; that stretch reads MRLRRAAATVITTGALLAAGTLGATPATA. The active-site Acyl-ester intermediate is the Ser64. Lys67 functions as the Proton acceptor in the catalytic mechanism. Residue Ser125 is part of the active site. Lys242 serves as a coordination point for substrate.

This sequence belongs to the peptidase S11 family.

It is found in the secreted. It carries out the reaction Preferential cleavage: (Ac)2-L-Lys-D-Ala-|-D-Ala. Also transpeptidation of peptidyl-alanyl moieties that are N-acyl substituents of D-alanine.. It participates in cell wall biogenesis; peptidoglycan biosynthesis. Its function is as follows. Removes C-terminal D-alanyl residues from sugar-peptide cell wall precursors. This Streptomyces sp. (strain K15) protein is D-alanyl-D-alanine carboxypeptidase.